The primary structure comprises 340 residues: Adenosine deaminase-like protein (340 aa).

Zn(2+) is bound by residues His-14 and His-16. Residues His-16, Asn-18, His-68, 100–103, and Gly-173 contribute to the N(6)-methyl-AMP site; that span reads TTPK. Residue His-200 participates in Zn(2+) binding. N(6)-methyl-AMP-binding residues include Glu-203, Asp-278, and Asp-279. Glu-203 functions as the Proton donor in the catalytic mechanism. Asp-278 provides a ligand contact to Zn(2+).

Belongs to the metallo-dependent hydrolases superfamily. Adenosine and AMP deaminases family. As to quaternary structure, monomer. Zn(2+) is required as a cofactor.

The enzyme catalyses N(6)-methyl-AMP + H2O + H(+) = IMP + methylamine. Functionally, catalyzes the hydrolysis of the free cytosolic methylated adenosine nucleotide N(6)-methyl-AMP (N6-mAMP) to produce inositol monophosphate (IMP) and methylamine. Is required for the catabolism of cytosolic N6-mAMP, which is derived from the degradation of mRNA containing N6-methylated adenine (m6A). This is Adenosine deaminase-like protein from Drosophila pseudoobscura pseudoobscura (Fruit fly).